Consider the following 150-residue polypeptide: Dual specificity protein phosphatase 23 (150 aa).

Positions 7–150 constitute a Tyrosine-protein phosphatase domain; sequence NFSWVLPGRL…AVFQFYQRTK (144 aa). The Phosphocysteine intermediate role is filled by cysteine 95.

This sequence belongs to the protein-tyrosine phosphatase family. Non-receptor class dual specificity subfamily. Widely expressed.

The protein resides in the cytoplasm. The protein localises to the cytosol. Its subcellular location is the nucleus. It catalyses the reaction O-phospho-L-tyrosyl-[protein] + H2O = L-tyrosyl-[protein] + phosphate. The enzyme catalyses O-phospho-L-seryl-[protein] + H2O = L-seryl-[protein] + phosphate. The catalysed reaction is O-phospho-L-threonyl-[protein] + H2O = L-threonyl-[protein] + phosphate. Protein phosphatase that mediates dephosphorylation of proteins phosphorylated on Tyr and Ser/Thr residues. In vitro, it can dephosphorylate p44-ERK1 (MAPK3) but not p54 SAPK-beta (MAPK10) in vitro. Able to enhance activation of JNK and p38 (MAPK14). The polypeptide is Dual specificity protein phosphatase 23 (Dusp23) (Mus musculus (Mouse)).